Consider the following 514-residue polypeptide: Contact site A protein (514 aa).

Residues 1–19 (MKFLLVLIILYNILNSAHS) form the signal peptide. The globular stretch occupies residues 20 to 453 (APTITAVSNG…EATTSTTYTI (434 aa)). The IPT/TIG 1 domain maps to 21–104 (PTITAVSNGK…TGGNGLFKYT (84 aa)). 5 N-linked (GlcNAc...) asparagine glycosylation sites follow: asparagine 128, asparagine 137, asparagine 207, asparagine 294, and asparagine 399. The region spanning 191–283 (PTITSITPLA…NQQPITFTYN (93 aa)) is the IPT/TIG 2 domain. Composition is skewed to low complexity over residues 446-475 (TTST…TATP) and 483-494 (STPEETEAPSSA). The tract at residues 446-494 (TTSTTYTIPDTPTPTDTATPSPTPTETATPSPTPKPTSTPEETEAPSSA) is disordered. Repeat copies occupy residues 462-469 (TATPSPTP) and 472-479 (TATPSPTP). The segment at 462 to 479 (TATPSPTPTETATPSPTP) is 2 X 8 AA repeats, Pro-rich. Residue serine 492 is the site of GPI-like-anchor amidated serine attachment. Positions 493–514 (SATTLISPLSLIVIFISFVLLI) are cleaved as a propeptide — removed in mature form.

In terms of processing, phosphorylated on serine and N-glycosylated with two types of oligosaccharide chains. Post-translationally, the GPI-like-anchor contains a phosphoceramide group, rather than a phosphatidyl group.

It localises to the cell membrane. In terms of biological role, this cell-surface glycoprotein mediates cell-cell binding via homophilic interaction. The polypeptide is Contact site A protein (csaA) (Dictyostelium discoideum (Social amoeba)).